We begin with the raw amino-acid sequence, 305 residues long: E3 ubiquitin-protein ligase RNF115 (305 aa).

Residue A2 is modified to N-acetylalanine. Over residues 100–110 the composition is skewed to basic and acidic residues; it reads NRANERGHQTH. A disordered region spans residues 100–139; that stretch reads NRANERGHQTHTDFWGPSRPPRLPMTRRYRSRGSTRPDRS. A Phosphoserine modification is found at S133. An RING-type zinc finger spans residues 229-270; it reads CPVCKEDYTVEEKVRQLPCNHFFHSSCIVPWLELHDTCPVCR. A disordered region spans residues 274-305; it reads NGEDSTRQTQSSEASASNRFSNDSQLHDRWTF. Positions 280–297 are enriched in polar residues; it reads RQTQSSEASASNRFSNDS.

As to quaternary structure, interacts with RAB7A. Interacts with EGFR and FLT3. Interacts with BST2. Interacts with STX17. Interacts with YWHAE. Phosphorylated by AKT1, allowing association with the 14-3-3 chaperones that facilitates associating with TLRs. In terms of processing, deubiquitinated by USP9X; antogonizing its autoubiquitination and subsequent proteasomal degradation. Post-translationally, RING-type zinc finger-dependent and E2-dependent autoubiquitination.

It is found in the cytoplasm. The protein resides in the cytoplasmic vesicle. Its subcellular location is the phagosome. It localises to the nucleus. The protein localises to the endoplasmic reticulum. It is found in the golgi apparatus. It carries out the reaction S-ubiquitinyl-[E2 ubiquitin-conjugating enzyme]-L-cysteine + [acceptor protein]-L-lysine = [E2 ubiquitin-conjugating enzyme]-L-cysteine + N(6)-ubiquitinyl-[acceptor protein]-L-lysine.. It functions in the pathway protein modification; protein ubiquitination. E3 ubiquitin-protein ligase that catalyzes the 'Lys-48'- and/or 'Lys-63'-linked polyubiquitination of various substrates and thereby plays a role in a number of signaling pathways including autophagy, innate immunity, cell proliferation and cell death. Plays a role in the endosomal trafficking and degradation of membrane receptors including EGFR, FLT3, MET and CXCR4 through their polyubiquitination. Participates together with BST2 in antiviral immunity by facilitating the internalization of HIV-1 virions into intracellular vesicles leading to their lysosomal degradation. Also possesses an antiviral activity independently of BST2 by promoting retroviral GAG proteins ubiquitination, redistribution to endo-lysosomal compartments and, ultimately, lysosomal degradation. Catalyzes distinct types of ubiquitination on MAVS and STING1 at different phases of viral infection to promote innate antiviral response. Mediates the 'Lys-48'-linked ubiquitination of MAVS leading to its proteasomal degradation and ubiquitinates STING1 via 'Lys-63'-linked polyubiquitination, critical for its oligomerization and the subsequent recruitment of TBK1. Plays a positive role in the autophagosome-lysosome fusion by interacting with STX17 and enhancing its stability without affecting 'Lys-48'- or 'Lys-63'-linked polyubiquitination levels, which in turn promotes autophagosome maturation. Negatively regulates TLR-induced expression of proinflammatory cytokines by catalyzing 'Lys-11'-linked ubiquitination of RAB1A and RAB13 to inhibit post-ER trafficking of TLRs to the Golgi by RAB1A and subsequently from the Golgi apparatus to the cell surface by RAB13. This Mus musculus (Mouse) protein is E3 ubiquitin-protein ligase RNF115.